Here is a 308-residue protein sequence, read N- to C-terminus: D-alanine--D-alanine ligase (308 aa).

The 201-residue stretch at 102–302 (KKVAAAAGVA…FGELLSWMVE (201 aa)) folds into the ATP-grasp domain. 128-183 (PMEPPYVVKPVREGSSFGVVIVKEDQTHPPQIISSAEWNYGAEVLVEKYIPGRELT) provides a ligand contact to ATP. Mg(2+) contacts are provided by Asp-252, Glu-269, and Asn-271.

The protein belongs to the D-alanine--D-alanine ligase family. Mg(2+) serves as cofactor. Mn(2+) is required as a cofactor.

The protein resides in the cytoplasm. The catalysed reaction is 2 D-alanine + ATP = D-alanyl-D-alanine + ADP + phosphate + H(+). It functions in the pathway cell wall biogenesis; peptidoglycan biosynthesis. In terms of biological role, cell wall formation. This chain is D-alanine--D-alanine ligase, found in Brucella anthropi (strain ATCC 49188 / DSM 6882 / CCUG 24695 / JCM 21032 / LMG 3331 / NBRC 15819 / NCTC 12168 / Alc 37) (Ochrobactrum anthropi).